The sequence spans 134 residues: Global transcriptional regulator Spx (134 aa).

Cysteine 10 and cysteine 13 are disulfide-bonded.

This sequence belongs to the ArsC family. Spx subfamily. As to quaternary structure, interacts with the C-terminal domain of the alpha subunit of the RNAP.

It localises to the cytoplasm. Functionally, global transcriptional regulator that plays a key role in stress response and exerts either positive or negative regulation of genes. Acts by interacting with the C-terminal domain of the alpha subunit of the RNA polymerase (RNAP). This interaction can enhance binding of RNAP to the promoter region of target genes and stimulate their transcription, or block interaction of RNAP with activator. The chain is Global transcriptional regulator Spx from Streptococcus pyogenes serotype M6 (strain ATCC BAA-946 / MGAS10394).